The chain runs to 380 residues: Capsular polysaccharide biosynthesis glycosyltransferase CapM (380 aa).

Belongs to the glycosyltransferase group 1 family. Glycosyltransferase 4 subfamily.

It functions in the pathway capsule biogenesis; capsule polysaccharide biosynthesis. Required for the biosynthesis of type 1 capsular polysaccharide. In Staphylococcus aureus, this protein is Capsular polysaccharide biosynthesis glycosyltransferase CapM (capM).